A 144-amino-acid chain; its full sequence is D-aminoacyl-tRNA deacylase (144 aa).

The short motif at 136-137 (GP) is the Gly-cisPro motif, important for rejection of L-amino acids element.

It belongs to the DTD family. As to quaternary structure, homodimer.

It localises to the cytoplasm. The enzyme catalyses glycyl-tRNA(Ala) + H2O = tRNA(Ala) + glycine + H(+). It carries out the reaction a D-aminoacyl-tRNA + H2O = a tRNA + a D-alpha-amino acid + H(+). An aminoacyl-tRNA editing enzyme that deacylates mischarged D-aminoacyl-tRNAs. Also deacylates mischarged glycyl-tRNA(Ala), protecting cells against glycine mischarging by AlaRS. Acts via tRNA-based rather than protein-based catalysis; rejects L-amino acids rather than detecting D-amino acids in the active site. By recycling D-aminoacyl-tRNA to D-amino acids and free tRNA molecules, this enzyme counteracts the toxicity associated with the formation of D-aminoacyl-tRNA entities in vivo and helps enforce protein L-homochirality. The sequence is that of D-aminoacyl-tRNA deacylase from Haemophilus influenzae (strain PittEE).